Here is a 491-residue protein sequence, read N- to C-terminus: MKYKNLRDFLELLEKQGELKRITQEIDPYLEMTEIADRTLRAGGPALLFENPKGYEIPVLCNLFGTPKRVALGMGQEDVTALRDVGRLLAFLKEPEQPKSFKDLWSSLPQFKQVLNMPTKVLSKAECQQIVFSDAEVDLYKLPIMHCWKDDVAPLVTWGLTITKGPSKKRQNLGIYRQQLIGKNKLIMRWLSHRGGALDFQEWKEARPNQPFPISVALGADPATILGAVTPVPDTLSEYAFAGLLRGNKTEVVKSISNDLEIPASAEIILEGYIDPTETALEGPYGDHTGYYNEQEYFPVFTVTHLTMRKDPIYHSTYTGRPPDEPAVLGEALNEVFIPILQKQFPEIVDFYLPPEGCSYRLAVVTIKKQYAGHAKRVMMGVWSFLRQFMYTKFVIVCDDDINARDWKDVIWAITTRSDPARDCTIIENTPIDYLDFASPIAGLGSKMGIDATNKWIGETQREWGTPIKKAPNVVKRIDDIWESLNIFAPK.

Asn-172 provides a ligand contact to Mn(2+). Residues 175–177, 189–191, and 194–195 each bind prenylated FMN; these read IYR, RWL, and RG. Glu-238 is a Mn(2+) binding site. The active-site Proton donor is the Asp-287.

Belongs to the UbiD family. Homohexamer. Prenylated FMN serves as cofactor. Mn(2+) is required as a cofactor.

It is found in the cell membrane. It carries out the reaction a 4-hydroxy-3-(all-trans-polyprenyl)benzoate + H(+) = a 2-(all-trans-polyprenyl)phenol + CO2. It functions in the pathway cofactor biosynthesis; ubiquinone biosynthesis. In terms of biological role, catalyzes the decarboxylation of 3-octaprenyl-4-hydroxy benzoate to 2-octaprenylphenol, an intermediate step in ubiquinone biosynthesis. This is 3-octaprenyl-4-hydroxybenzoate carboxy-lyase from Histophilus somni (strain 2336) (Haemophilus somnus).